A 390-amino-acid polypeptide reads, in one-letter code: Ribonuclease D (390 aa).

In terms of domain architecture, 3'-5' exonuclease spans Ile-7 to Leu-173. Residues Lys-212 to Glu-293 enclose the HRDC domain.

This sequence belongs to the RNase D family. A divalent metal cation is required as a cofactor.

The protein localises to the cytoplasm. The catalysed reaction is Exonucleolytic cleavage that removes extra residues from the 3'-terminus of tRNA to produce 5'-mononucleotides.. Functionally, exonuclease involved in the 3' processing of various precursor tRNAs. Initiates hydrolysis at the 3'-terminus of an RNA molecule and releases 5'-mononucleotides. The protein is Ribonuclease D of Zymomonas mobilis subsp. mobilis (strain ATCC 31821 / ZM4 / CP4).